The chain runs to 92 residues: MELAFRESLKKMRGTKSKEKFSQELEMSRSNYSRIESGKSDPTIKTLEQIVKLTNSTLVVDLIPNEPTEPEPETEQVTLELEMEEEKSNDFV.

A compositionally biased stretch (basic and acidic residues) spans Met1–Met27. Disordered regions lie at residues Met1 to Ser40 and Ile63 to Val92. Positions Leu9 to Leu62 constitute an HTH cro/C1-type domain. A DNA-binding region (H-T-H motif) is located at residues Lys20 to Lys39.

Involved in copy control of plasmid pIP501. This chain is Plasmid copy control protein CopR (copR), found in Streptococcus agalactiae.